The sequence spans 198 residues: MIDFDGYRPNVGIVICNSKGQVLWAKRYGQNSWQFPQGGINDNESAEQAMYRELFEEVGLSPKDVKILYISKHWLRYKLPKRLLRYDSKPVCIGQKQRWFLLQLVSDEKNINMQSSKSPEFDGWRWVSFWYPVRQVVSFKKEVYRKAMKEFASVLFDGAKENLLSSKSNESDLKTHHTTKKSTFLTKHSKKHFHKSRG.

The Nudix hydrolase domain maps to 6 to 149 (GYRPNVGIVI…KKEVYRKAMK (144 aa)). Residues 38–59 (GGINDNESAEQAMYRELFEEVG) carry the Nudix box motif.

Belongs to the Nudix hydrolase family. RppH subfamily. A divalent metal cation is required as a cofactor.

In terms of biological role, accelerates the degradation of transcripts by removing pyrophosphate from the 5'-end of triphosphorylated RNA, leading to a more labile monophosphorylated state that can stimulate subsequent ribonuclease cleavage. The sequence is that of RNA pyrophosphohydrolase from Pasteurella multocida (strain Pm70).